Here is a 633-residue protein sequence, read N- to C-terminus: MYLGLKVGVTFASSIPAAVISMAVLKFFKDSSILENNMVQTQASSAGTLSSVIFVLPGLLMMGYWQDFPFWQTMLICAAGGTLGVLFTIPLRRAMVVNSNLPYPEGVAAAEILKAGNHADGDSGVKDIAYGGVLAGLVAFLTNGLRVMADGASAWIQTGKAAFQLPMGFSLALLGAGYLIGIVGGIAMLIGVILTWGVAVPYFTMSEDIAADASLIDSAMTVWKTKVRYIGVGTIGIAAIWTLLILMKPMIEGMVHSFRMLKGGQEASEHRIDIDLSPKTMIYILIATVALIVISLHHFIAAAPISPELSILLVVVCTFLAVFIGFFVAAASGYMAGLVGSSSSPISGIGIISVIVISLVLVSIGNASGLFETVDGQKFLTALTLFTASIVITTACISNDNLQDLKTGLLVEATPWRQQVALIIGCFVGALVIAPVLEILYHAYGFSGALPRPDMDPSQALSAPQATLMTAISQGIFTNKLEWTYILTGVGLGAVLITIDAFLKKVSNKVFSLPVIAVGIGIYLPPSINTPVIVGAFLAWIMARHIAKLGNKEVSAKAERFGTLFSAGLIVGESLMGVILAFIIAASVTTGGSEAPLSLNLENWDTIGEWFGLIVFIVGIVIFASRVLRAKKI.

Transmembrane regions (helical) follow at residues 8–28 (GVTFASSIPAAVISMAVLKFF), 45–65 (SAGTLSSVIFVLPGLLMMGYW), 70–90 (FWQTMLICAAGGTLGVLFTIP), 128–148 (IAYGGVLAGLVAFLTNGLRVM), 180–200 (IGIVGGIAMLIGVILTWGVAV), 230–250 (IGVGTIGIAAIWTLLILMKPM), 281–301 (MIYILIATVALIVISLHHFIA), 311–331 (ILLVVVCTFLAVFIGFFVAAA), 345–365 (PISGIGIISVIVISLVLVSIG), 379–399 (FLTALTLFTASIVITTACISN), 420–440 (VALIIGCFVGALVIAPVLEIL), 483–503 (WTYILTGVGLGAVLITIDAFL), 515–535 (VIAVGIGIYLPPSINTPVIVG), 564–584 (LFSAGLIVGESLMGVILAFII), and 604–624 (WDTIGEWFGLIVFIVGIVIFA).

Belongs to the oligopeptide OPT transporter family.

It is found in the cell membrane. The polypeptide is Putative oligopeptide transporter HI_0561 (Haemophilus influenzae (strain ATCC 51907 / DSM 11121 / KW20 / Rd)).